A 214-amino-acid chain; its full sequence is Protein transport protein SEC22 (214 aa).

At methionine 1–serine 192 the chain is on the cytoplasmic side. Positions leucine 6–leucine 117 constitute a Longin domain. The v-SNARE coiled-coil homology domain occupies asparagine 132 to serine 192. Serine 160 is modified (phosphoserine). A helical; Anchor for type IV membrane protein transmembrane segment spans residues glutamine 193 to leucine 213. Residue lysine 214 is a topological domain, vesicular.

Belongs to the synaptobrevin family. As to quaternary structure, component of two distinct SNARE complexes consisting of SED5, BOS1, BET1 and SEC22 or UFE1, USE1, SEC20 and SEC22. YKT6 can probably replace SEC22 as subunit of either complex. Interacts with SEC24, YIF1 and YIP1.

It localises to the membrane. The protein resides in the endoplasmic reticulum membrane. It is found in the golgi apparatus membrane. Functionally, nonessential SNARE involved in targeting and fusion of ER-derived transport vesicles with the Golgi complex as well as Golgi-derived retrograde transport vesicles with the ER. The sequence is that of Protein transport protein SEC22 (SEC22) from Saccharomyces cerevisiae (strain ATCC 204508 / S288c) (Baker's yeast).